Reading from the N-terminus, the 411-residue chain is LL-diaminopimelate aminotransferase (411 aa).

Residues Y15 and G42 each contribute to the substrate site. Pyridoxal 5'-phosphate is bound by residues Y72, 105–106, Y129, N186, Y217, and 245–247; these read SK and SFS. Positions 106, 129, and 186 each coordinate substrate. K248 is modified (N6-(pyridoxal phosphate)lysine). 2 residues coordinate pyridoxal 5'-phosphate: R256 and N287. Substrate is bound by residues N287 and R382.

This sequence belongs to the class-I pyridoxal-phosphate-dependent aminotransferase family. LL-diaminopimelate aminotransferase subfamily. As to quaternary structure, homodimer. Requires pyridoxal 5'-phosphate as cofactor.

The enzyme catalyses (2S,6S)-2,6-diaminopimelate + 2-oxoglutarate = (S)-2,3,4,5-tetrahydrodipicolinate + L-glutamate + H2O + H(+). Its pathway is amino-acid biosynthesis; L-lysine biosynthesis via DAP pathway; LL-2,6-diaminopimelate from (S)-tetrahydrodipicolinate (aminotransferase route): step 1/1. Involved in the synthesis of meso-diaminopimelate (m-DAP or DL-DAP), required for both lysine and peptidoglycan biosynthesis. Catalyzes the direct conversion of tetrahydrodipicolinate to LL-diaminopimelate. Is also able to use meso-diaminopimelate, lysine or ornithine as substrates. The polypeptide is LL-diaminopimelate aminotransferase (Protochlamydia amoebophila (strain UWE25)).